The sequence spans 570 residues: Putative ABC transporter ATP-binding protein SACOL2708 (570 aa).

ABC transporter domains are found at residues Ile-6–Glu-247 and Leu-304–Arg-537. ATP contacts are provided by residues Gly-40–Ser-47 and Gly-338–Ser-345.

The protein belongs to the ABC transporter superfamily.

Its subcellular location is the cell membrane. In terms of biological role, probably part of an ABC transporter complex. Responsible for energy coupling to the transport system. This chain is Putative ABC transporter ATP-binding protein SACOL2708, found in Staphylococcus aureus (strain COL).